Consider the following 153-residue polypeptide: Mitochondrial fission 1 protein (153 aa).

Topologically, residues 1 to 124 (MTQLPYAVDA…LIDDKVTKEG (124 aa)) are cytoplasmic. Residues 73–106 (RECLYYLALGNYKLGNYAQARKYNDALLENEPAN) form a TPR repeat. The chain crosses the membrane as a helical span at residues 125–145 (LMGVAIISGVAVAAGVIGGVL). Residues 146 to 153 (LRNLGRKR) lie on the Mitochondrial intermembrane side of the membrane.

Belongs to the FIS1 family.

The protein resides in the mitochondrion outer membrane. Has a role in mitochondrial fission. Has a role in outer membrane fission but not matrix separation. This chain is Mitochondrial fission 1 protein (mtp-2), found in Neurospora crassa (strain ATCC 24698 / 74-OR23-1A / CBS 708.71 / DSM 1257 / FGSC 987).